We begin with the raw amino-acid sequence, 306 residues long: NADH-cytochrome b5 reductase 2-B (306 aa).

A helical membrane pass occupies residues 12–32; that stretch reads PLLLSSGIAVTAAAAVYFSTG. An FAD-binding FR-type domain is found at 53 to 157; sequence STWVDLPLVK…TGPIVKYEWK (105 aa). FAD is bound at residue 160-195; sequence KFDSVTLLGAGSGITPLYQLMGSILSNPEDKTKINL.

Belongs to the flavoprotein pyridine nucleotide cytochrome reductase family. FAD serves as cofactor.

The protein localises to the mitochondrion outer membrane. It catalyses the reaction 2 Fe(III)-[cytochrome b5] + NADH = 2 Fe(II)-[cytochrome b5] + NAD(+) + H(+). May mediate the reduction of outer membrane cytochrome b5. The chain is NADH-cytochrome b5 reductase 2-B (MCR1B) from Vanderwaltozyma polyspora (strain ATCC 22028 / DSM 70294 / BCRC 21397 / CBS 2163 / NBRC 10782 / NRRL Y-8283 / UCD 57-17) (Kluyveromyces polysporus).